A 156-amino-acid chain; its full sequence is MDALIAQLQRQFRDYTISLYQQGFLDDQFTELKKLQDDGSPDFVSEVLSLFFEDCVKLISNMARALDTTGTVDFSQVGASVHQLKGSSSSVGAKRVKTLCVSFKECCEAKNYEGCVRCLQQVDIEYKALKTKLQDMFNLEKQIIQAGGIVPQVDIN.

Methionine 1 carries the post-translational modification N-acetylmethionine. In terms of domain architecture, HPt spans 40-147 (SPDFVSEVLS…NLEKQIIQAG (108 aa)). Histidine 82 is subject to Phosphohistidine.

As to quaternary structure, interacts with the B-type response regulators ARR1, ARR2 and ARR10. Binds to AHK1, AHK2, AHK3, AHK4, AHK5, ETR1 and CKI1. Two-component system major event consists of a His-to-Asp phosphorelay between a sensor histidine kinase (HK) and a response regulator (RR). In plants, the His-to-Asp phosphorelay involves an additional intermediate named Histidine-containing phosphotransfer protein (HPt). This multistep phosphorelay consists of a His-Asp-His-Asp sequential transfer of a phosphate group between first a His and an Asp of the HK protein, followed by the transfer to a conserved His of the HPt protein and finally the transfer to an Asp in the receiver domain of the RR protein. Strongly expressed in flowers and roots. Detected also in leaves, siliques and stems.

The protein resides in the cytoplasm. Its subcellular location is the cytosol. It is found in the nucleus. Functionally, functions as a two-component phosphorelay mediators between cytokinin sensor histidine kinases and response regulator (B-type ARRs). Plays an important role in propagating cytokinin signal transduction through the multistep His-to-Asp phosphorelay. The protein is Histidine-containing phosphotransfer protein 2 (AHP2) of Arabidopsis thaliana (Mouse-ear cress).